The chain runs to 309 residues: Olfactory receptor 2G3 (309 aa).

Over 1–25 the chain is Extracellular; that stretch reads MGLGNESSLMDFILLGFSDHPRLEA. A glycan (N-linked (GlcNAc...) asparagine) is linked at Asn-5. Residues 26–49 traverse the membrane as a helical segment; it reads VLFVFVLFFYLLTLVGNFTIIIIS. Residues 50 to 57 lie on the Cytoplasmic side of the membrane; sequence YLDPPLHT. The chain crosses the membrane as a helical span at residues 58 to 79; the sequence is PMYFFLSNLSLLDICFTTSLAP. Residues 80–100 lie on the Extracellular side of the membrane; sequence QTLVNLQRPKKTITYGGCVAQ. Cysteines 97 and 189 form a disulfide. A helical transmembrane segment spans residues 101–120; the sequence is LYISLALGSTECILLADMAL. At 121-139 the chain is on the cytoplasmic side; the sequence is DRYIAVCKPLHYVVIMNPR. Residues 140–158 traverse the membrane as a helical segment; the sequence is LCQQLASISWLSGLASSLI. At 159 to 195 the chain is on the extracellular side; the sequence is HATFTLQLPLCGNHRLDHFICEVPALLKLACVDTTVN. The chain crosses the membrane as a helical span at residues 196–219; sequence ELVLFVVSVLFVVIPPALISISYG. The Cytoplasmic segment spans residues 220–236; it reads FITQAVLRIKSVEARHK. A helical membrane pass occupies residues 237 to 259; it reads AFSTCSSHLTVVIIFYGTIIYVY. At 260 to 272 the chain is on the extracellular side; sequence LQPSDSYAQDQGK. A helical transmembrane segment spans residues 273 to 292; that stretch reads FISLFYTMVTPTLNPIIYTL. Residues 293-309 lie on the Cytoplasmic side of the membrane; the sequence is RNKDMKEALRKLLSGKL.

It belongs to the G-protein coupled receptor 1 family.

It localises to the cell membrane. Functionally, odorant receptor. This is Olfactory receptor 2G3 (OR2G3) from Homo sapiens (Human).